The following is a 133-amino-acid chain: UPF0102 protein AB57_1130 (133 aa).

The protein belongs to the UPF0102 family.

The polypeptide is UPF0102 protein AB57_1130 (Acinetobacter baumannii (strain AB0057)).